We begin with the raw amino-acid sequence, 788 residues long: Endonuclease MutS2 (788 aa).

ATP is bound at residue 332 to 339; that stretch reads GPNTGGKT. Residues 713–788 form the Smr domain; that stretch reads VDLRGMDAEE…GTGVTVVEIK (76 aa).

Belongs to the DNA mismatch repair MutS family. MutS2 subfamily. Homodimer. Binds to stalled ribosomes, contacting rRNA.

Its function is as follows. Endonuclease that is involved in the suppression of homologous recombination and thus may have a key role in the control of bacterial genetic diversity. Acts as a ribosome collision sensor, splitting the ribosome into its 2 subunits. Detects stalled/collided 70S ribosomes which it binds and splits by an ATP-hydrolysis driven conformational change. Acts upstream of the ribosome quality control system (RQC), a ribosome-associated complex that mediates the extraction of incompletely synthesized nascent chains from stalled ribosomes and their subsequent degradation. Probably generates substrates for RQC. In Clostridium botulinum (strain 657 / Type Ba4), this protein is Endonuclease MutS2.